The following is a 109-amino-acid chain: Hainantoxin-XVIII-3 (109 aa).

Positions methionine 1–alanine 18 are cleaved as a signal peptide. A propeptide spanning residues phenylalanine 19–alanine 46 is cleaved from the precursor. Disulfide bonds link cysteine 47–cysteine 62, cysteine 55–cysteine 68, cysteine 59–cysteine 108, and cysteine 61–cysteine 81.

It belongs to the neurotoxin 25 family. F7 subfamily. In terms of tissue distribution, expressed by the venom gland.

Its subcellular location is the secreted. Functionally, putative ion channel inhibitor. In Cyriopagopus hainanus (Chinese bird spider), this protein is Hainantoxin-XVIII-3.